Here is a 131-residue protein sequence, read N- to C-terminus: Inner membrane protein YecN (131 aa).

At 1 to 107 (MVSALYAVLS…RWRRSGMSAT (107 aa)) the chain is on the cytoplasmic side. The chain crosses the membrane as a helical span at residues 108–128 (WCALLLMVLANLWYMPWELVF). Over 129 to 131 (SLR) the chain is Periplasmic.

It is found in the cell inner membrane. This Escherichia coli O6:H1 (strain CFT073 / ATCC 700928 / UPEC) protein is Inner membrane protein YecN (yecN).